A 594-amino-acid chain; its full sequence is APOBEC1 complementation factor (594 aa).

RRM domains are found at residues 56–134, 136–218, and 231–303; these read CEIF…ASVD, CRLF…WAEP, and KILY…LAKP. A required for nuclear localization region spans residues 360-409; the sequence is HFPATKGHLSNRAIIRAPSVREIYMNVPVGAAGVRGLGGRGYLAYTGLGR. Thr499 is subject to Phosphothreonine.

In terms of assembly, part of the apolipoprotein B mRNA editing complex with APOBEC1. Interacts with TNPO2; TNPO2 may be responsible for transport of A1CF into the nucleus. Interacts with SYNCRIP. Interacts with CELF2/CUGBP2. Interacts with RBM47. In terms of tissue distribution, widely expressed with highest levels in brain, liver, pancreas, colon and spleen.

It localises to the nucleus. The protein resides in the endoplasmic reticulum. It is found in the cytoplasm. Essential component of the apolipoprotein B mRNA editing enzyme complex which is responsible for the postranscriptional editing of a CAA codon for Gln to a UAA codon for stop in APOB mRNA. Binds to APOB mRNA and is probably responsible for docking the catalytic subunit, APOBEC1, to the mRNA to allow it to deaminate its target cytosine. The complex also protects the edited APOB mRNA from nonsense-mediated decay. In Homo sapiens (Human), this protein is APOBEC1 complementation factor (A1CF).